A 76-amino-acid chain; its full sequence is Small ribosomal subunit protein uS17 (76 aa).

It belongs to the universal ribosomal protein uS17 family. As to quaternary structure, part of the 30S ribosomal subunit.

Functionally, one of the primary rRNA binding proteins, it binds specifically to the 5'-end of 16S ribosomal RNA. This is Small ribosomal subunit protein uS17 from Ruegeria pomeroyi (strain ATCC 700808 / DSM 15171 / DSS-3) (Silicibacter pomeroyi).